Here is a 340-residue protein sequence, read N- to C-terminus: Phenylalanine--tRNA ligase alpha subunit (340 aa).

A Mg(2+)-binding site is contributed by glutamate 258.

It belongs to the class-II aminoacyl-tRNA synthetase family. Phe-tRNA synthetase alpha subunit type 1 subfamily. In terms of assembly, tetramer of two alpha and two beta subunits. Requires Mg(2+) as cofactor.

The protein localises to the cytoplasm. The catalysed reaction is tRNA(Phe) + L-phenylalanine + ATP = L-phenylalanyl-tRNA(Phe) + AMP + diphosphate + H(+). This is Phenylalanine--tRNA ligase alpha subunit from Corynebacterium efficiens (strain DSM 44549 / YS-314 / AJ 12310 / JCM 11189 / NBRC 100395).